The chain runs to 354 residues: Methylthioribose-1-phosphate isomerase (354 aa).

Substrate is bound by residues 54 to 56 (RGA), Arg97, and Gln204. Asp245 serves as the catalytic Proton donor. 255–256 (NK) is a binding site for substrate.

The protein belongs to the eIF-2B alpha/beta/delta subunits family. MtnA subfamily.

It catalyses the reaction 5-(methylsulfanyl)-alpha-D-ribose 1-phosphate = 5-(methylsulfanyl)-D-ribulose 1-phosphate. It functions in the pathway amino-acid biosynthesis; L-methionine biosynthesis via salvage pathway; L-methionine from S-methyl-5-thio-alpha-D-ribose 1-phosphate: step 1/6. Its function is as follows. Catalyzes the interconversion of methylthioribose-1-phosphate (MTR-1-P) into methylthioribulose-1-phosphate (MTRu-1-P). The protein is Methylthioribose-1-phosphate isomerase of Albidiferax ferrireducens (strain ATCC BAA-621 / DSM 15236 / T118) (Rhodoferax ferrireducens).